Reading from the N-terminus, the 224-residue chain is tRNA (guanine-N(7)-)-methyltransferase (224 aa).

S-adenosyl-L-methionine is bound by residues Glu-54, Glu-79, Glu-106, and Asp-129. The active site involves Asp-129. 2 residues coordinate substrate: Lys-133 and Asp-165.

Belongs to the class I-like SAM-binding methyltransferase superfamily. TrmB family.

The enzyme catalyses guanosine(46) in tRNA + S-adenosyl-L-methionine = N(7)-methylguanosine(46) in tRNA + S-adenosyl-L-homocysteine. Its pathway is tRNA modification; N(7)-methylguanine-tRNA biosynthesis. In terms of biological role, catalyzes the formation of N(7)-methylguanine at position 46 (m7G46) in tRNA. The sequence is that of tRNA (guanine-N(7)-)-methyltransferase from Chlamydia muridarum (strain MoPn / Nigg).